Consider the following 177-residue polypeptide: ECF RNA polymerase sigma factor SigL (177 aa).

The sigma-70 factor domain-2 stretch occupies residues 18–85 (LYDEHAAVLW…MIIDERRSAR (68 aa)). Residues 42-45 (DVVQ) carry the Interaction with polymerase core subunit RpoC motif. The tract at residues 119 to 167 (ALAQLSAEHRAVIQRSYYRGWSTAQIATDLGIAEGTVKSRLHYAVRALR) is sigma-70 factor domain-4. Positions 141 to 160 (TAQIATDLGIAEGTVKSRLH) form a DNA-binding region, H-T-H motif.

Belongs to the sigma-70 factor family. ECF subfamily. As to quaternary structure, interacts transiently with the RNA polymerase catalytic core formed by RpoA, RpoB, RpoC and RpoZ (2 alpha, 1 beta, 1 beta' and 1 omega subunit) to form the RNA polymerase holoenzyme that can initiate transcription. Interacts (via sigma-70 factor domain 4) with anti-sigma-L factor RslA.

Functionally, sigma factors are initiation factors that promote the attachment of RNA polymerase to specific initiation sites and are then released. Extracytoplasmic function (ECF) sigma factors are held in an inactive form by an anti-sigma factor until released by regulated intramembrane proteolysis. This chain is ECF RNA polymerase sigma factor SigL (sigL), found in Mycobacterium tuberculosis (strain ATCC 35801 / TMC 107 / Erdman).